The chain runs to 86 residues: MTKFNLEQALQGAPVRLNNGFKAYIFADVSLLAINEPYPLIGGYAYSISSFYDNQEHQRFEECRWAKDGKCDRLSALGSIAGMWED.

This is an uncharacterized protein from Haemophilus phage HP1 (strain HP1c1) (Bacteriophage HP1).